A 47-amino-acid chain; its full sequence is Cytochrome b559 subunit beta (47 aa).

Residues 23–39 (WLAVHALAIPSVFFLGA) traverse the membrane as a helical segment. A heme-binding site is contributed by H27.

Belongs to the PsbE/PsbF family. Heterodimer of an alpha subunit and a beta subunit. PSII is composed of 1 copy each of membrane proteins PsbA, PsbB, PsbC, PsbD, PsbE, PsbF, PsbH, PsbI, PsbJ, PsbK, PsbL, PsbM, PsbT, PsbX, PsbY, Psb30/Ycf12, peripheral proteins PsbO, CyanoQ (PsbQ), PsbU, PsbV and a large number of cofactors. It forms dimeric complexes. It depends on heme b as a cofactor.

It is found in the cellular thylakoid membrane. Functionally, this b-type cytochrome is tightly associated with the reaction center of photosystem II (PSII). PSII is a light-driven water:plastoquinone oxidoreductase that uses light energy to abstract electrons from H(2)O, generating O(2) and a proton gradient subsequently used for ATP formation. It consists of a core antenna complex that captures photons, and an electron transfer chain that converts photonic excitation into a charge separation. This chain is Cytochrome b559 subunit beta, found in Prochlorococcus marinus subsp. pastoris (strain CCMP1986 / NIES-2087 / MED4).